Reading from the N-terminus, the 326-residue chain is Phospho-N-acetylmuramoyl-pentapeptide-transferase (326 aa).

Transmembrane regions (helical) follow at residues Ile-2–Phe-22, Val-51–Val-71, Leu-73–Ile-93, Ile-113–Glu-133, Gly-143–Ser-163, Gly-175–Thr-195, Met-199–Asn-219, Ile-225–Leu-245, Met-250–Ile-270, and Val-305–Leu-325.

The protein belongs to the glycosyltransferase 4 family. MraY subfamily. Mg(2+) serves as cofactor.

It localises to the cell membrane. The enzyme catalyses UDP-N-acetyl-alpha-D-muramoyl-L-alanyl-gamma-D-glutamyl-meso-2,6-diaminopimeloyl-D-alanyl-D-alanine + di-trans,octa-cis-undecaprenyl phosphate = di-trans,octa-cis-undecaprenyl diphospho-N-acetyl-alpha-D-muramoyl-L-alanyl-D-glutamyl-meso-2,6-diaminopimeloyl-D-alanyl-D-alanine + UMP. Its pathway is cell wall biogenesis; peptidoglycan biosynthesis. Catalyzes the initial step of the lipid cycle reactions in the biosynthesis of the cell wall peptidoglycan: transfers peptidoglycan precursor phospho-MurNAc-pentapeptide from UDP-MurNAc-pentapeptide onto the lipid carrier undecaprenyl phosphate, yielding undecaprenyl-pyrophosphoryl-MurNAc-pentapeptide, known as lipid I. In Wolbachia sp. subsp. Drosophila simulans (strain wRi), this protein is Phospho-N-acetylmuramoyl-pentapeptide-transferase.